Here is a 116-residue protein sequence, read N- to C-terminus: DNA-binding protein Tpen_0471 (116 aa).

This sequence belongs to the PDCD5 family.

This is DNA-binding protein Tpen_0471 from Thermofilum pendens (strain DSM 2475 / Hrk 5).